The following is a 280-amino-acid chain: Cell envelope integrity protein EipB (280 aa).

A signal peptide spans 1 to 24 (MRFVRIAAAASGATVFMWAGFAGA). A disulfide bond links Cys69 and Cys278.

In terms of assembly, monomer.

It localises to the periplasm. Functions in the periplasm to maintain cell envelope integrity. This is Cell envelope integrity protein EipB from Brucella abortus (strain 2308).